The chain runs to 231 residues: Nucleoside diphosphate kinase II, chloroplastic (231 aa).

The N-terminal 62 residues, 1–62 (MVGATVVSKW…RNSASRRRLR (62 aa)), are a transit peptide targeting the chloroplast. The ATP site is built by lysine 91, phenylalanine 139, arginine 167, threonine 173, arginine 184, and asparagine 194. Histidine 197 (pros-phosphohistidine intermediate) is an active-site residue.

It belongs to the NDK family. Interacts with PHYA, MPK3 and MPK6. It depends on Mg(2+) as a cofactor. Post-translationally, autophosphorylated.

The protein localises to the plastid. It localises to the chloroplast. It catalyses the reaction a 2'-deoxyribonucleoside 5'-diphosphate + ATP = a 2'-deoxyribonucleoside 5'-triphosphate + ADP. The catalysed reaction is a ribonucleoside 5'-diphosphate + ATP = a ribonucleoside 5'-triphosphate + ADP. Functionally, major role in the synthesis of nucleoside triphosphates other than ATP. The ATP gamma phosphate is transferred to the NDP beta phosphate via a ping-pong mechanism, using a phosphorylated active-site intermediate. May activate MPK3 and MPK6. May be involved in the regulation of cellular redox state and hydrogen peroxide-mediated MAP kinase signaling. In Arabidopsis thaliana (Mouse-ear cress), this protein is Nucleoside diphosphate kinase II, chloroplastic (NDPK2).